Reading from the N-terminus, the 387-residue chain is Exodeoxyribonuclease 7 large subunit (387 aa).

It belongs to the XseA family. As to quaternary structure, heterooligomer composed of large and small subunits.

The protein resides in the cytoplasm. The catalysed reaction is Exonucleolytic cleavage in either 5'- to 3'- or 3'- to 5'-direction to yield nucleoside 5'-phosphates.. Bidirectionally degrades single-stranded DNA into large acid-insoluble oligonucleotides, which are then degraded further into small acid-soluble oligonucleotides. The sequence is that of Exodeoxyribonuclease 7 large subunit from Campylobacter jejuni (strain RM1221).